Reading from the N-terminus, the 264-residue chain is 3-methyl-2-oxobutanoate hydroxymethyltransferase (264 aa).

2 residues coordinate Mg(2+): aspartate 45 and aspartate 84. 3-methyl-2-oxobutanoate-binding positions include 45–46 (DS), aspartate 84, and lysine 112. Residue glutamate 114 participates in Mg(2+) binding. Glutamate 181 (proton acceptor) is an active-site residue.

It belongs to the PanB family. In terms of assembly, homodecamer; pentamer of dimers. Mg(2+) is required as a cofactor.

The protein localises to the cytoplasm. The catalysed reaction is 3-methyl-2-oxobutanoate + (6R)-5,10-methylene-5,6,7,8-tetrahydrofolate + H2O = 2-dehydropantoate + (6S)-5,6,7,8-tetrahydrofolate. It participates in cofactor biosynthesis; (R)-pantothenate biosynthesis; (R)-pantoate from 3-methyl-2-oxobutanoate: step 1/2. In terms of biological role, catalyzes the reversible reaction in which hydroxymethyl group from 5,10-methylenetetrahydrofolate is transferred onto alpha-ketoisovalerate to form ketopantoate. The chain is 3-methyl-2-oxobutanoate hydroxymethyltransferase from Shewanella denitrificans (strain OS217 / ATCC BAA-1090 / DSM 15013).